The primary structure comprises 414 residues: Arrestin domain-containing protein 3 (414 aa).

2 short sequence motifs (PPxY motif) span residues 346-349 (PPSY) and 391-394 (PPLY). A disordered region spans residues 393–414 (LYSEIDPNPDQSSEDRPSCPSR). Residues 405 to 414 (SEDRPSCPSR) show a composition bias toward basic and acidic residues.

The protein belongs to the arrestin family. As to quaternary structure, interacts (via PPxY motifs) with NEDD4 (via WW domains). Interacts with ADRB2. Interacts with ADRB3. Interacts with HGS (via PPxY motifs). Does not bind TXN (thioredoxin). Interacts with ITCH. Detected in visceral fat, subcutaneous fat, brown fat and skeletal muscle, and at lower levels in kidney.

It localises to the cytoplasm. The protein resides in the cell membrane. It is found in the lysosome. The protein localises to the endosome. Its subcellular location is the early endosome. Functionally, adapter protein that plays a role in regulating cell-surface expression of adrenergic receptors and probably also other G protein-coupled receptors. Plays a role in NEDD4-mediated ubiquitination and endocytosis af activated ADRB2 and subsequent ADRB2 degradation. May recruit NEDD4 to ADRB2. Alternatively, may function as adapter protein that does not play a major role in recruiting NEDD4 to ADRB2, but rather plays a role in a targeting ADRB2 to endosomes. In Mus musculus (Mouse), this protein is Arrestin domain-containing protein 3 (Arrdc3).